We begin with the raw amino-acid sequence, 1025 residues long: Multidrug resistance protein MdtC (1025 aa).

A run of 12 helical transmembrane segments spans residues 3–23 (FFAL…AITL), 333–353 (EVEQ…FLFL), 360–380 (IIPA…MYLC), 387–407 (LSLM…IVVL), 431–451 (VGFT…PLLL), 463–483 (FAVT…TLTP), 528–548 (LVGV…ISIP), 853–873 (VILI…LYES), 875–895 (VHPL…LLAL), 897–917 (LFNA…IGIV), 953–973 (PIMM…LSGG), and 984–1004 (ITIV…TPVV).

The protein belongs to the resistance-nodulation-cell division (RND) (TC 2.A.6) family. MdtC subfamily. In terms of assembly, part of a tripartite efflux system composed of MdtA, MdtB and MdtC. MdtC forms a heteromultimer with MdtB.

It is found in the cell inner membrane. Functionally, the MdtABC tripartite complex confers resistance against novobiocin and deoxycholate. The protein is Multidrug resistance protein MdtC of Escherichia coli (strain SMS-3-5 / SECEC).